The chain runs to 204 residues: HTH-type transcriptional repressor KstR2 (204 aa).

Residues 13 to 73 (SGRRTELLDI…EILRGFLDDL (61 aa)) form the HTH tetR-type domain. A DNA-binding region (H-T-H motif) is located at residues 36-55 (TVRDIADAAGILSGSLYHHF).

Homodimer.

Functionally, controls the expression of a small regulon that may play a role in the utilization of cholesterol. The protein is HTH-type transcriptional repressor KstR2 (kstR2) of Rhodococcus jostii (strain RHA1).